We begin with the raw amino-acid sequence, 120 residues long: Large ribosomal subunit protein eL8 (120 aa).

This sequence belongs to the eukaryotic ribosomal protein eL8 family. As to quaternary structure, part of the 50S ribosomal subunit. Probably part of the RNase P complex.

It is found in the cytoplasm. Functionally, multifunctional RNA-binding protein that recognizes the K-turn motif in ribosomal RNA, the RNA component of RNase P, box H/ACA, box C/D and box C'/D' sRNAs. The polypeptide is Large ribosomal subunit protein eL8 (Haloquadratum walsbyi (strain DSM 16790 / HBSQ001)).